A 429-amino-acid chain; its full sequence is Argininosuccinate lyase (429 aa).

This sequence belongs to the lyase 1 family. Argininosuccinate lyase subfamily.

The protein resides in the cytoplasm. It carries out the reaction 2-(N(omega)-L-arginino)succinate = fumarate + L-arginine. The protein operates within amino-acid biosynthesis; L-arginine biosynthesis; L-arginine from L-ornithine and carbamoyl phosphate: step 3/3. The chain is Argininosuccinate lyase from Pyrobaculum arsenaticum (strain DSM 13514 / JCM 11321 / PZ6).